The following is a 251-amino-acid chain: MSDALPMSPAEFEQALRAKGAYYHIHHPYHVAMYQGRATREQIQGWVANRFYYQVNIPMKDAAILANCPDREVRREWIQRLLDHDGAPGEDGGIEAWLRLGQAVGLDPDQLRSQELVLPGVRFAVDAYVNFARRASWQEAASSSLTELFAPQIHQSRLDSWPQHYPWIDPAGYEYFRTRLGQARRDVEHGLAITLQHYTTRAGQERMLEILQFKLDILWSMLDAMSMAYELNRPPYHSVTQERVWHKGITL.

The protein belongs to the PqqC family.

The catalysed reaction is 6-(2-amino-2-carboxyethyl)-7,8-dioxo-1,2,3,4,7,8-hexahydroquinoline-2,4-dicarboxylate + 3 O2 = pyrroloquinoline quinone + 2 H2O2 + 2 H2O + H(+). Its pathway is cofactor biosynthesis; pyrroloquinoline quinone biosynthesis. Its function is as follows. Ring cyclization and eight-electron oxidation of 3a-(2-amino-2-carboxyethyl)-4,5-dioxo-4,5,6,7,8,9-hexahydroquinoline-7,9-dicarboxylic-acid to PQQ. The protein is Pyrroloquinoline-quinone synthase of Pseudomonas putida (strain ATCC 47054 / DSM 6125 / CFBP 8728 / NCIMB 11950 / KT2440).